Consider the following 481-residue polypeptide: Phosphoglucosamine mutase (481 aa).

The Phosphoserine intermediate role is filled by S128. S128, D269, D271, and D273 together coordinate Mg(2+). Residue S128 is modified to Phosphoserine.

It belongs to the phosphohexose mutase family. It depends on Mg(2+) as a cofactor. Post-translationally, activated by phosphorylation.

The catalysed reaction is alpha-D-glucosamine 1-phosphate = D-glucosamine 6-phosphate. In terms of biological role, catalyzes the conversion of glucosamine-6-phosphate to glucosamine-1-phosphate. The sequence is that of Phosphoglucosamine mutase from Synechocystis sp. (strain ATCC 27184 / PCC 6803 / Kazusa).